A 222-amino-acid polypeptide reads, in one-letter code: Orotidine 5'-phosphate decarboxylase (222 aa).

Substrate is bound by residues aspartate 11, lysine 30, 59–68 (DFKLADIGYI), serine 115, 164–174 (PGMGSQGGSYG), glycine 187, and arginine 188. Residue lysine 61 is the Proton donor of the active site.

The protein belongs to the OMP decarboxylase family. Type 1 subfamily. In terms of assembly, homodimer.

The catalysed reaction is orotidine 5'-phosphate + H(+) = UMP + CO2. Its pathway is pyrimidine metabolism; UMP biosynthesis via de novo pathway; UMP from orotate: step 2/2. Catalyzes the decarboxylation of orotidine 5'-monophosphate (OMP) to uridine 5'-monophosphate (UMP). This is Orotidine 5'-phosphate decarboxylase from Saccharolobus solfataricus (strain ATCC 35092 / DSM 1617 / JCM 11322 / P2) (Sulfolobus solfataricus).